Consider the following 96-residue polypeptide: Protein C4 (96 aa).

Gly2 is lipidated: N-myristoyl glycine; by host. A disordered region spans residues 66–96 (STDDLQGEDSRQPMTLTPRQLTQEVSRRLLM). The segment covering 77 to 89 (QPMTLTPRQLTQE) has biased composition (polar residues).

This sequence belongs to the geminiviridae protein AC4/C4 family.

It is found in the host cell membrane. Pathogenicity determinant. May act as a suppressor of RNA-mediated gene silencing, also known as post-transcriptional gene silencing (PTGS), a mechanism of plant viral defense that limits the accumulation of viral RNAs. The protein is Protein C4 of Cynanchum acutum (Tomato).